The sequence spans 391 residues: Probable protein phosphatase 2C 32 (391 aa).

A disordered region spans residues 1-53; it reads MSCTVAIPSSPVFSPSRRPLSCKAASASASPESVSVAASSPAQAAPPAGSPLR. The span at 8–51 shows a compositional bias: low complexity; that stretch reads PSSPVFSPSRRPLSCKAASASASPESVSVAASSPAQAAPPAGSP. Residues 95–115 form a helical membrane-spanning segment; that stretch reads LVVPVCGGAAAAAAAAAVAAV. Residues 129 to 386 form the PPM-type phosphatase domain; sequence EFAVYCRRGK…DDISIVIIQL (258 aa). Residues aspartate 168, glycine 169, aspartate 332, and aspartate 377 each coordinate Mn(2+).

Belongs to the PP2C family. Mg(2+) is required as a cofactor. Mn(2+) serves as cofactor.

It localises to the membrane. It catalyses the reaction O-phospho-L-seryl-[protein] + H2O = L-seryl-[protein] + phosphate. It carries out the reaction O-phospho-L-threonyl-[protein] + H2O = L-threonyl-[protein] + phosphate. This is Probable protein phosphatase 2C 32 from Oryza sativa subsp. japonica (Rice).